Reading from the N-terminus, the 377-residue chain is Histone deacetylase 8 (377 aa).

The interval leucine 14 to glycine 324 is histone deacetylase. Position 39 is a phosphoserine (serine 39). Position 101 (aspartate 101) interacts with substrate. Histidine 143 serves as the catalytic Proton acceptor. Glycine 151 is a binding site for substrate. Positions 178, 180, and 267 each coordinate a divalent metal cation. Tyrosine 306 is a binding site for substrate.

The protein belongs to the histone deacetylase family. HD type 1 subfamily. Interacts with PEPB2-MYH11, a fusion protein consisting of the 165 N-terminal residues of CBF-beta (PEPB2) with the tail region of MYH11 produced by the inversion Inv(16)(p13q22), a translocation associated with acute myeloid leukemia of M4EO subtype. The PEPB2-MYH1 fusion protein also interacts with RUNX1, a well known transcriptional regulator, suggesting that the interaction with HDAC8 may participate in the conversion of RUNX1 into a constitutive transcriptional repressor. Interacts with CBFA2T3. Interacts with phosphorylated SMG5/EST1B; this interaction protects SMG5 from ubiquitin-mediated degradation. Associates with alpha-SMA (smooth muscle alpha-actin). A divalent metal cation is required as a cofactor. In terms of processing, phosphorylated by PKA on serine 39. Phosphorylation reduces deacetylase activity observed preferentially on histones H3 and H4. As to expression, weakly expressed in most tissues. Expressed at higher level in heart, brain, kidney and pancreas and also in liver, lung, placenta, prostate and kidney.

It localises to the nucleus. It is found in the chromosome. The protein resides in the cytoplasm. The enzyme catalyses N(6)-acetyl-L-lysyl-[histone] + H2O = L-lysyl-[histone] + acetate. It carries out the reaction N(6)-acetyl-L-lysyl-[protein] + H2O = L-lysyl-[protein] + acetate. The catalysed reaction is N(6)-(2E)-butenoyl-L-lysyl-[protein] + H2O = (2E)-2-butenoate + L-lysyl-[protein]. Its activity is regulated as follows. Its activity is inhibited by trichostatin A (TSA), suberoylanilide hydroxamic acid (SAHA), 3-(1-methyl-4-phenylacetyl-1H-2-pyrrolyl)-N-hydroxy-2-propenamide (APHA), 4-dimethylamino-N-(6-hydroxycarbamoyethyl)benzamide-N-hydroxy-7-(4-dimethylaminobenzoyl)aminoheptanamide (MS-344), 5-(4-methyl-benzoylamino)-biphenyl-3,4'-dicarboxylic acid 3-dimethylamide 4'-hydroxyamide (CRA-A) and butyrate. Functionally, histone deacetylase that catalyzes the deacetylation of lysine residues on the N-terminal part of the core histones (H2A, H2B, H3 and H4). Histone deacetylation gives a tag for epigenetic repression and plays an important role in transcriptional regulation, cell cycle progression and developmental events. Histone deacetylases act via the formation of large multiprotein complexes. Also involved in the deacetylation of cohesin complex protein SMC3 regulating release of cohesin complexes from chromatin. May play a role in smooth muscle cell contractility. In addition to protein deacetylase activity, also has protein-lysine deacylase activity: acts as a protein decrotonylase by mediating decrotonylation ((2E)-butenoyl) of histones. This chain is Histone deacetylase 8, found in Homo sapiens (Human).